The sequence spans 322 residues: HPr kinase/phosphorylase (322 aa).

Residues His153 and Lys174 contribute to the active site. 168–175 (GRSGLGKS) lines the ATP pocket. Ser175 is a Mg(2+) binding site. Asp192 (proton acceptor; for phosphorylation activity. Proton donor; for dephosphorylation activity) is an active-site residue. Positions 217 to 226 (MEIRGLGVVD) are important for the catalytic mechanism of both phosphorylation and dephosphorylation. Glu218 contacts Mg(2+). The active site involves Arg259. Positions 280–285 (PIFPGK) are important for the catalytic mechanism of dephosphorylation.

Belongs to the HPrK/P family. Homohexamer. It depends on Mg(2+) as a cofactor.

It catalyses the reaction [HPr protein]-L-serine + ATP = [HPr protein]-O-phospho-L-serine + ADP + H(+). The catalysed reaction is [HPr protein]-O-phospho-L-serine + phosphate + H(+) = [HPr protein]-L-serine + diphosphate. Its function is as follows. Catalyzes the ATP- as well as the pyrophosphate-dependent phosphorylation of a specific serine residue in HPr, a phosphocarrier protein of the phosphoenolpyruvate-dependent sugar phosphotransferase system (PTS). HprK/P also catalyzes the pyrophosphate-producing, inorganic phosphate-dependent dephosphorylation (phosphorolysis) of seryl-phosphorylated HPr (P-Ser-HPr). This Chlorobium phaeobacteroides (strain DSM 266 / SMG 266 / 2430) protein is HPr kinase/phosphorylase.